The primary structure comprises 225 residues: Ribose-5-phosphate isomerase A (225 aa).

Residues Met-1 to Asp-20 form a disordered region. Residues Thr-32–Thr-35, Asp-86–Asp-89, and Lys-98–Gly-101 each bind substrate. Residue Glu-107 is the Proton acceptor of the active site. Lys-125 is a binding site for substrate.

Belongs to the ribose 5-phosphate isomerase family. As to quaternary structure, homodimer.

It catalyses the reaction aldehydo-D-ribose 5-phosphate = D-ribulose 5-phosphate. It functions in the pathway carbohydrate degradation; pentose phosphate pathway; D-ribose 5-phosphate from D-ribulose 5-phosphate (non-oxidative stage): step 1/1. Catalyzes the reversible conversion of ribose-5-phosphate to ribulose 5-phosphate. The protein is Ribose-5-phosphate isomerase A of Natronomonas pharaonis (strain ATCC 35678 / DSM 2160 / CIP 103997 / JCM 8858 / NBRC 14720 / NCIMB 2260 / Gabara) (Halobacterium pharaonis).